The sequence spans 314 residues: ATP synthase gamma chain (314 aa).

The protein belongs to the ATPase gamma chain family. In terms of assembly, F-type ATPases have 2 components, CF(1) - the catalytic core - and CF(0) - the membrane proton channel. CF(1) has five subunits: alpha(3), beta(3), gamma(1), delta(1), epsilon(1). CF(0) has three main subunits: a, b and c.

Its subcellular location is the cell inner membrane. Functionally, produces ATP from ADP in the presence of a proton gradient across the membrane. The gamma chain is believed to be important in regulating ATPase activity and the flow of protons through the CF(0) complex. This is ATP synthase gamma chain from Gloeobacter violaceus (strain ATCC 29082 / PCC 7421).